Consider the following 215-residue polypeptide: Pyrrolidone-carboxylate peptidase (215 aa).

Active-site residues include E80, C143, and H167.

Belongs to the peptidase C15 family. Homotetramer.

It localises to the cytoplasm. It carries out the reaction Release of an N-terminal pyroglutamyl group from a polypeptide, the second amino acid generally not being Pro.. Removes 5-oxoproline from various penultimate amino acid residues except L-proline. This chain is Pyrrolidone-carboxylate peptidase, found in Pectobacterium carotovorum subsp. carotovorum (strain PC1).